The chain runs to 265 residues: Diphthine synthase (265 aa).

Residues Leu-10, Asp-87, Val-90, 115–116 (SI), Leu-166, Ala-209, and His-234 each bind S-adenosyl-L-methionine.

This sequence belongs to the diphthine synthase family. As to quaternary structure, homodimer.

The catalysed reaction is 2-[(3S)-amino-3-carboxypropyl]-L-histidyl-[translation elongation factor 2] + 3 S-adenosyl-L-methionine = diphthine-[translation elongation factor 2] + 3 S-adenosyl-L-homocysteine + 3 H(+). It functions in the pathway protein modification; peptidyl-diphthamide biosynthesis. Functionally, S-adenosyl-L-methionine-dependent methyltransferase that catalyzes the trimethylation of the amino group of the modified target histidine residue in translation elongation factor 2 (EF-2), to form an intermediate called diphthine. The three successive methylation reactions represent the second step of diphthamide biosynthesis. This Pyrococcus horikoshii (strain ATCC 700860 / DSM 12428 / JCM 9974 / NBRC 100139 / OT-3) protein is Diphthine synthase.